The chain runs to 92 residues: DNA-directed RNA polymerase subunit Rpo11 (92 aa).

Belongs to the archaeal Rpo11/eukaryotic RPB11/RPC19 RNA polymerase subunit family. In terms of assembly, part of the RNA polymerase complex.

The protein localises to the cytoplasm. The catalysed reaction is RNA(n) + a ribonucleoside 5'-triphosphate = RNA(n+1) + diphosphate. DNA-dependent RNA polymerase (RNAP) catalyzes the transcription of DNA into RNA using the four ribonucleoside triphosphates as substrates. The polypeptide is DNA-directed RNA polymerase subunit Rpo11 (Pyrobaculum aerophilum (strain ATCC 51768 / DSM 7523 / JCM 9630 / CIP 104966 / NBRC 100827 / IM2)).